We begin with the raw amino-acid sequence, 424 residues long: Histidinol dehydrogenase (424 aa).

Tyr-121, Gln-183, and Asn-206 together coordinate NAD(+). The substrate site is built by Ser-229, Gln-251, and His-254. 2 residues coordinate Zn(2+): Gln-251 and His-254. Residues Glu-319 and His-320 each act as proton acceptor in the active site. Residues His-320, Asp-353, Glu-407, and His-412 each contribute to the substrate site. A Zn(2+)-binding site is contributed by Asp-353. His-412 lines the Zn(2+) pocket.

It belongs to the histidinol dehydrogenase family. Requires Zn(2+) as cofactor.

It catalyses the reaction L-histidinol + 2 NAD(+) + H2O = L-histidine + 2 NADH + 3 H(+). It functions in the pathway amino-acid biosynthesis; L-histidine biosynthesis; L-histidine from 5-phospho-alpha-D-ribose 1-diphosphate: step 9/9. Its function is as follows. Catalyzes the sequential NAD-dependent oxidations of L-histidinol to L-histidinaldehyde and then to L-histidine. This is Histidinol dehydrogenase from Geobacillus kaustophilus (strain HTA426).